The sequence spans 207 residues: Guanylate kinase (207 aa).

A Guanylate kinase-like domain is found at 4 to 184 (GTLYIVSAPS…ALMDFKAIIR (181 aa)). 11–18 (APSGAGKS) serves as a coordination point for ATP.

This sequence belongs to the guanylate kinase family.

The protein localises to the cytoplasm. The enzyme catalyses GMP + ATP = GDP + ADP. It catalyses the reaction dZMP + ATP = dZDP + ADP. It functions in the pathway purine metabolism. Its function is as follows. Essential for recycling GMP and indirectly, cGMP. Functionally, (Microbial infection) Catalyzes the phosphorylation of dZMP to dZDP, when the bacterium is infected by a phage that produces the substrate for the synthesis of dZTP (2- amino-2'-deoxyadenosine 5'-triphosphate), which is then used by the phage as a DNA polymerase substrate. In Vibrio cholerae serotype O1 (strain ATCC 39315 / El Tor Inaba N16961), this protein is Guanylate kinase (gmk).